We begin with the raw amino-acid sequence, 439 residues long: MMPPKPAAEDVADEQPEPPDEDPDVAEADPTGRYLRYREIIGSGSSKTVYKAFDAVDGIEVAWGKVEINERIMGSSKELQRLRTEIQLLKSLQHKHILKLYASWVDTNRRTVNIVTELFTSGNLREYRTKHKKVDMKAMRRWAKQILTGLEYLHSQKPPIIHRDLKCDNIFINGNHGKVKIGDFGLAMVMQQRKTRSIQGTIEFMAPELFGENYNELVDIYSFGMCMLEMVTCECPYSECKGFIQIYKKITEGVKPAALSKVKDAEVRGFIESCLASVSDRLPASELLKSPFLQSDDANHRSSNSVQEPVKFPENNFTKDEPIFVSLAPNNGTVNGKEQSFILVLQKSDFLLEGNMSTTNPVMLFLRFPGPDGKFKNVQFPFDMEKDTSLSVSTEMVEQLELPEWNNPVLAELIDAFLLHILPSWKPCVKVGKMLPSSS.

A disordered region spans residues 1–30 (MMPPKPAAEDVADEQPEPPDEDPDVAEADP). The segment covering 10-27 (DVADEQPEPPDEDPDVAE) has biased composition (acidic residues). The 259-residue stretch at 35–293 (LRYREIIGSG…ASELLKSPFL (259 aa)) folds into the Protein kinase domain. Residues 116–119 (TELF) and Lys166 contribute to the ATP site. Asp183 functions as the Proton acceptor in the catalytic mechanism.

It belongs to the protein kinase superfamily. Ser/Thr protein kinase family. WNK subfamily.

The catalysed reaction is L-seryl-[protein] + ATP = O-phospho-L-seryl-[protein] + ADP + H(+). It catalyses the reaction L-threonyl-[protein] + ATP = O-phospho-L-threonyl-[protein] + ADP + H(+). The chain is Probable serine/threonine-protein kinase WNK6 (WNK6) from Oryza sativa subsp. japonica (Rice).